Reading from the N-terminus, the 290-residue chain is uncharacterized protein (290 aa).

The protein belongs to the glycosyltransferase 2 family.

This is an uncharacterized protein from Methanocaldococcus jannaschii (strain ATCC 43067 / DSM 2661 / JAL-1 / JCM 10045 / NBRC 100440) (Methanococcus jannaschii).